The primary structure comprises 697 residues: MFS antiporter QDR3 (697 aa).

At 1–141 (MSHSPNLSPQ…ARDYPNKIKY (141 aa)) the chain is on the cytoplasmic side. The disordered stretch occupies residues 38–109 (HPIGHHGREQ…KPTSTSIKTN (72 aa)). Low complexity-rich tracts occupy residues 53 to 69 (NTTKTTTTTTNKIHTTT) and 85 to 99 (DLSSLESQQEQYLSQ). Residues 142-162 (LIVFIIAFASLAGPFGTSVML) traverse the membrane as a helical segment. Residues 163–180 (PAIDDIVNDLNTNVSTVN) are Extracellular-facing. Asn-175 and Asn-180 each carry an N-linked (GlcNAc...) asparagine glycan. The chain crosses the membrane as a helical span at residues 181 to 201 (VSVGIYLLSLGIFPLWWSSFS). Residues 202 to 215 (ERFGRRSVYMVSFT) lie on the Cytoplasmic side of the membrane. Residues 216–236 (LFVAFSIGTALSPNIAALIVL) traverse the membrane as a helical segment. Topologically, residues 237–240 (RVLQ) are extracellular. A helical transmembrane segment spans residues 241–261 (GGSSASVQAVGAGTIADLFIP). Over 262 to 268 (QERGQAM) the chain is Cytoplasmic. Residues 269–289 (GLYYLGPLAGPFLAPILGGAV) form a helical membrane-spanning segment. Topologically, residues 290-296 (SQAWGWR) are extracellular. A helical transmembrane segment spans residues 297-317 (ATQWLLMIISACSFVLITFFL). Residues 318 to 485 (PETLRRVDTI…SIILLKHPPV (168 aa)) lie on the Cytoplasmic side of the membrane. The tract at residues 338–367 (DNNGSQNEKIHDDFAGADNSSVHDIDGNPI) is disordered. A helical transmembrane segment spans residues 486-506 (VLVISFSAISFAAIYFFNMAI). Topologically, residues 507–519 (SYEYARSPYNFSS) are extracellular. N-linked (GlcNAc...) asparagine glycosylation is present at Asn-516. A helical transmembrane segment spans residues 520-540 (VILGLMYIPNSVTYFMASIIG). The Cytoplasmic segment spans residues 541-565 (GKWNDRLLNRYAQKHGELVPESRLS). Residues 566 to 586 (WNIVVAIILYPMACLIFGWTI) traverse the membrane as a helical segment. Over 587–590 (KYRE) the chain is Extracellular. The helical transmembrane segment at 591-611 (FWVIPLIGTALFGFASMLVIG) threads the bilayer. Over 612-626 (ATVTYLVDSLPGKGA) the chain is Cytoplasmic. A helical membrane pass occupies residues 627–647 (TGVALNNLIRQILAAIATFIV). Residues 648–653 (EPLLRA) lie on the Extracellular side of the membrane. A helical transmembrane segment spans residues 654–674 (IGAGVLFSIIAGILLVSSLVL). At 675–697 (LYLKKRGAFFREHYDVMDLYAKL) the chain is on the cytoplasmic side.

The protein belongs to the major facilitator superfamily. CAR1 family.

It is found in the cell membrane. Functionally, MFS antiporter that does not display functional linkage as drug transporter and performs functions that significantly affect biofilm development and virulence. No substrate for transport has been identified yet, but plays an important role in the growth in the host. The polypeptide is MFS antiporter QDR3 (QDR3) (Candida albicans (strain SC5314 / ATCC MYA-2876) (Yeast)).